Reading from the N-terminus, the 1891-residue chain is TATA-binding protein-associated factor mot1 (1891 aa).

Residues 30 to 68 form an HEAT 1 repeat; it reads PDELFNLLGRILPYLRSKSWDTRAAAAKAIGLIVANADT. Disordered regions lie at residues 184 to 216, 241 to 283, and 295 to 316; these read FVAS…LSKR, LSSR…LDRS, and FKGA…EGPN. A compositionally biased stretch (basic and acidic residues) spans 264–275; the sequence is ENGEERNGDSKP. HEAT repeat units follow at residues 473–511 and 569–606; these read SKLM…EFVK and SSFG…LEGE. A compositionally biased stretch (low complexity) spans 699 to 710; sequence SAAAPARSSPAS. The tract at residues 699–740 is disordered; the sequence is SAAAPARSSPASNTPEGTKGRRRKSEKKEAPPPSAHNVDGHM. HEAT repeat units lie at residues 957-996, 1139-1177, 1181-1216, and 1219-1257; these read PKKP…YYTT, YPWV…VITV, TMLV…VMED, and LPYV…LVPL. The 174-residue stretch at 1316-1489 folds into the Helicase ATP-binding domain; it reads AFLNRYNLHG…WSLFDFLMPG (174 aa). 1329–1336 is a binding site for ATP; that stretch reads DDMGLGKT. Residues 1440-1443 carry the DEAH box motif; that stretch reads DEGH. The HEAT 8 repeat unit spans residues 1526–1565; it reads EALHKQVLPFLLRRLKEEVLNDLPPKIIQNYYCDPSELQR. Residues 1663 to 1813 form the Helicase C-terminal domain; that stretch reads DLSGASYVSP…STVVNQQNAG (151 aa).

The protein belongs to the SNF2/RAD54 helicase family. Forms the NCT transcriptional regulatory complex with nctA and nctB.

The protein resides in the nucleus. Functionally, regulates transcription in association with TATA binding protein (TBP). Removes TBP from the TATA box via its C-terminal ATPase activity. Both transcription activation and repression require its ATPase activity. Part of the NCT transcriptional regulatory complex that acts as a key regulator of ergosterol biosynthesis and the azole exporter cdr1B. The NCT complex binds the promoters of genes linked to azole susceptibility, and especially represses the expression of cdr1B transporter. The chain is TATA-binding protein-associated factor mot1 from Aspergillus fumigatus (strain CBS 144.89 / FGSC A1163 / CEA10) (Neosartorya fumigata).